A 163-amino-acid chain; its full sequence is ATP synthase subunit b', chloroplastic (163 aa).

A helical membrane pass occupies residues 26-46; that stretch reads ATLPLMALQFILLTVILTFVF.

This sequence belongs to the ATPase B chain family. In terms of assembly, F-type ATPases have 2 components, F(1) - the catalytic core - and F(0) - the membrane proton channel. F(1) has five subunits: alpha(3), beta(3), gamma(1), delta(1), epsilon(1). F(0) has four main subunits: a(1), b(1), b'(1) and c(10-14). The alpha and beta chains form an alternating ring which encloses part of the gamma chain. F(1) is attached to F(0) by a central stalk formed by the gamma and epsilon chains, while a peripheral stalk is formed by the delta, b and b' chains.

It is found in the plastid. The protein localises to the chloroplast thylakoid membrane. In terms of biological role, f(1)F(0) ATP synthase produces ATP from ADP in the presence of a proton or sodium gradient. F-type ATPases consist of two structural domains, F(1) containing the extramembraneous catalytic core and F(0) containing the membrane proton channel, linked together by a central stalk and a peripheral stalk. During catalysis, ATP synthesis in the catalytic domain of F(1) is coupled via a rotary mechanism of the central stalk subunits to proton translocation. Component of the F(0) channel, it forms part of the peripheral stalk, linking F(1) to F(0). The b'-subunit is a diverged and duplicated form of b found in plants and photosynthetic bacteria. The protein is ATP synthase subunit b', chloroplastic of Ochrosphaera neapolitana.